We begin with the raw amino-acid sequence, 249 residues long: Triosephosphate isomerase (249 aa).

Residue 9–11 (NWK) participates in substrate binding. H94 functions as the Electrophile in the catalytic mechanism. E166 serves as the catalytic Proton acceptor. Substrate is bound by residues G172 and 232–233 (GG).

This sequence belongs to the triosephosphate isomerase family. In terms of assembly, homodimer.

It is found in the cytoplasm. The enzyme catalyses D-glyceraldehyde 3-phosphate = dihydroxyacetone phosphate. The protein operates within carbohydrate biosynthesis; gluconeogenesis. It functions in the pathway carbohydrate degradation; glycolysis; D-glyceraldehyde 3-phosphate from glycerone phosphate: step 1/1. Involved in the gluconeogenesis. Catalyzes stereospecifically the conversion of dihydroxyacetone phosphate (DHAP) to D-glyceraldehyde-3-phosphate (G3P). The polypeptide is Triosephosphate isomerase (Xylella fastidiosa (strain M23)).